Here is a 335-residue protein sequence, read N- to C-terminus: G-protein coupled receptor 157 (335 aa).

Residues 1–15 (MQPSPPPTELVPSER) are Extracellular-facing. The chain crosses the membrane as a helical span at residues 16–36 (AVVLLSCALSALGSGLLVATH). The Cytoplasmic segment spans residues 37–48 (ALWPDLRSRARR). Residues 49-69 (LLLFLSLADLLSAASYFYGVL) form a helical membrane-spanning segment. The Extracellular portion of the chain corresponds to 70–87 (QNFAGPSWDCVLQGALST). Residues 88 to 108 (FANTSSFFWTVAIALYLYLSI) form a helical membrane-spanning segment. Residues 109 to 119 (VRAARGPRTDR) lie on the Cytoplasmic side of the membrane. The chain crosses the membrane as a helical span at residues 120–140 (LLWAFHVVSWGVPLVITVAAV). Over 141–166 (ALKKIGYDASDVSVGWCWIDLEAKDH) the chain is Extracellular. A helical transmembrane segment spans residues 167 to 187 (VLWMLLTGKLWEMLAYVLLPL). The Cytoplasmic portion of the chain corresponds to 188–226 (LYLLVRKHINRAHTALSEYRPILSQEHRLLRHSSMADKK). The helical transmembrane segment at 227–247 (LVLIPLIFIGLRVWSTVRFVL) threads the bilayer. The Extracellular portion of the chain corresponds to 248–258 (TLCGSPAVQTP). Residues 259 to 279 (VLVVLHGIGNTFQGGANCIMF) traverse the membrane as a helical segment. Residues 280–335 (VLCTRAVRTRLFSLCCCCCSSQPPTKSPAGTPKAPAPSKPGESQESQGTPGELPST) lie on the Cytoplasmic side of the membrane. The segment at 300-335 (SQPPTKSPAGTPKAPAPSKPGESQESQGTPGELPST) is disordered. Over residues 320-335 (GESQESQGTPGELPST) the composition is skewed to polar residues.

It belongs to the G-protein coupled receptor 2 family.

It is found in the cell projection. Its subcellular location is the cilium membrane. In terms of biological role, orphan receptor that promotes neuronal differentiation of radial glial progenitors (RGPs). The activity of this receptor is mediated by a G(q)-protein that activates a phosphatidylinositol-calcium second messenger. The sequence is that of G-protein coupled receptor 157 (GPR157) from Homo sapiens (Human).